Here is a 243-residue protein sequence, read N- to C-terminus: VQ motif-containing protein 33 (243 aa).

Positions 1 to 16 are enriched in polar residues; that stretch reads MEVSTSSMSSKPEQMQ. The disordered stretch occupies residues 1-49; it reads MEVSTSSMSSKPEQMQNPPPMISSPRFQPQIISPHHHDQHQHLSNPYPT. A VQ motif is present at residues 59–68; it reads FKQVVQMLTG. Disordered stretches follow at residues 69-98 and 138-162; these read SSTD…SIPP and FTGG…SENI. A phosphoserine mark is found at S83 and S95. Polar residues predominate over residues 84–98; the sequence is PVNNNNKGSSFSIPP. T139 carries the post-translational modification Phosphothreonine. Phosphoserine is present on residues S148, S152, S165, S167, and S178. The span at 149 to 162 shows a compositional bias: low complexity; that stretch reads PRFSPRNSSSSENI. The disordered stretch occupies residues 180–243; the sequence is VTPLRSNDDP…FPVASPARNS (64 aa). Residue T181 is modified to Phosphothreonine. The segment covering 191–201 has biased composition (polar residues); that stretch reads NKSSPLSLGNS. Phosphoserine is present on residues S218 and S221. Residue T222 is modified to Phosphothreonine. A Phosphoserine modification is found at S238.

Phosphorylated on serine and threonine residues by MPK6.

It is found in the nucleus. Its function is as follows. May modulate WRKY transcription factor activities. The protein is VQ motif-containing protein 33 of Arabidopsis thaliana (Mouse-ear cress).